Here is a 237-residue protein sequence, read N- to C-terminus: Undecaprenyl-diphosphatase (237 aa).

7 consecutive transmembrane segments (helical) span residues 38–58, 65–85, 92–112, 126–146, 166–186, 191–211, and 217–237; these read QTAVLHLGTLVSVVLFAFDGI, WRIILNLIVSTIPAGVFGVLF, LFSSPRFLPLFFSVTALILMF, MSFLDALLVGIAQLFALFPGI, ALQYSFLMSIPVVLGAGILGL, VTILAPIFAFLSGLFALYVLS, and GKIWQFSYYCLFVAILSYLVG.

The protein belongs to the UppP family.

The protein resides in the cell inner membrane. The catalysed reaction is di-trans,octa-cis-undecaprenyl diphosphate + H2O = di-trans,octa-cis-undecaprenyl phosphate + phosphate + H(+). Its function is as follows. Catalyzes the dephosphorylation of undecaprenyl diphosphate (UPP). Confers resistance to bacitracin. This is Undecaprenyl-diphosphatase from Thermotoga sp. (strain RQ2).